Here is a 240-residue protein sequence, read N- to C-terminus: REF/SRPP-like protein At1g67360 (240 aa).

The interval 208–240 (KEDARRKKGGDTAGKKGETTDAADGDKSSSDSE) is disordered.

The protein belongs to the REF/SRPP family.

The protein is REF/SRPP-like protein At1g67360 of Arabidopsis thaliana (Mouse-ear cress).